The following is a 207-amino-acid chain: RNA chaperone ProQ (207 aa).

The disordered stretch occupies residues 100–156; sequence TLAESKAKVQARRKEQAQKARDEEKSKPKTKKAPQQRRANKPQAQKPAKQPVETRAL. The segment covering 111–126 has biased composition (basic and acidic residues); the sequence is RRKEQAQKARDEEKSK. A compositionally biased stretch (basic residues) spans 127–139; it reads PKTKKAPQQRRAN.

The protein belongs to the ProQ family.

The protein localises to the cytoplasm. Functionally, RNA chaperone with significant RNA binding, RNA strand exchange and RNA duplexing activities. The sequence is that of RNA chaperone ProQ from Vibrio vulnificus (strain CMCP6).